A 326-amino-acid chain; its full sequence is Acetyl-coenzyme A carboxylase carboxyl transferase subunit alpha (326 aa).

Residues 44–298 (QLESRAEQLR…KEALLFHLNT (255 aa)) form the CoA carboxyltransferase C-terminal domain.

This sequence belongs to the AccA family. In terms of assembly, acetyl-CoA carboxylase is a heterohexamer composed of biotin carboxyl carrier protein (AccB), biotin carboxylase (AccC) and two subunits each of ACCase subunit alpha (AccA) and ACCase subunit beta (AccD).

It is found in the cytoplasm. The enzyme catalyses N(6)-carboxybiotinyl-L-lysyl-[protein] + acetyl-CoA = N(6)-biotinyl-L-lysyl-[protein] + malonyl-CoA. Its pathway is lipid metabolism; malonyl-CoA biosynthesis; malonyl-CoA from acetyl-CoA: step 1/1. Component of the acetyl coenzyme A carboxylase (ACC) complex. First, biotin carboxylase catalyzes the carboxylation of biotin on its carrier protein (BCCP) and then the CO(2) group is transferred by the carboxyltransferase to acetyl-CoA to form malonyl-CoA. In Synechocystis sp. (strain ATCC 27184 / PCC 6803 / Kazusa), this protein is Acetyl-coenzyme A carboxylase carboxyl transferase subunit alpha.